Consider the following 1480-residue polypeptide: ABC transporter G family member 49 (1480 aa).

Residues 1 to 18 (MHTTTQATPQKSMVMTTT) show a composition bias toward polar residues. 3 disordered regions span residues 1-42 (MHTT…AGSS), 60-81 (VSGE…EDDE), and 104-124 (SSTR…GGAA). Gly residues-rich tracts occupy residues 63-73 (ELGGGGGGGGG) and 107-123 (RGGG…GGGA). The 274-residue stretch at 212–485 (LAAKLGFSHH…FESCGFKCPE (274 aa)) folds into the ABC transporter 1 domain. 245–252 (GPPGCGKT) contributes to the ATP binding site. An ABC transmembrane type-2 1 domain is found at 563 to 775 (HLLKACFDRE…AEIGLTGNEF (213 aa)). The next 6 helical transmembrane spans lie at 581–601 (FLHI…GTVF), 619–639 (SLFY…VMSI), 656–676 (GWAY…VAAL), 699–719 (LLVL…VGSY), 725–745 (VGPI…GFLI), and 811–831 (VAAL…GLTI). The region spanning 877 to 1129 (ISFQDVNYYV…KVIQYFQSIP (253 aa)) is the ABC transporter 2 domain. Residue 922–929 (GVTGAGKT) participates in ATP binding. The ABC transmembrane type-2 2 domain maps to 1202–1418 (EQFKACLWKQ…TLNLLFTTQF (217 aa)). 7 helical membrane-spanning segments follow: residues 1226–1246 (IVFM…QGNI), 1254–1274 (GLFT…INNS), 1311–1331 (IPYV…TIGY), 1340–1360 (WFFY…MLIV), 1368–1388 (VASI…GFVM), 1396–1416 (WWIW…LFTT), and 1449–1469 (LLPL…ILYG).

This sequence belongs to the ABC transporter superfamily. ABCG family. PDR (TC 3.A.1.205) subfamily.

The protein resides in the membrane. Functionally, may be a general defense protein. This is ABC transporter G family member 49 from Oryza sativa subsp. japonica (Rice).